Consider the following 401-residue polypeptide: Probable peptidoglycan glycosyltransferase FtsW (401 aa).

Over 1 to 26 the chain is Cytoplasmic; the sequence is MAEVLRWLRLDLGQSGGLAWERLDWR. Residues 27-47 traverse the membrane as a helical segment; it reads LALTVLALAGLGLVMVGSASV. Over 48-65 the chain is Periplasmic; that stretch reads SIAEGATGDPLHYLYRQA. A helical membrane pass occupies residues 66–86; that stretch reads VFLAVALMAAVACLHLSLDQF. Topologically, residues 87–88 are cytoplasmic; it reads YR. A helical membrane pass occupies residues 89-109; sequence GGPVLLVLGFFLLLVVLIPGV. Residues 110-118 are Periplasmic-facing; the sequence is GREVNGATR. A helical membrane pass occupies residues 119-139; it reads WIPLGLINLQVAEVARVCFII. Topologically, residues 140–154 are cytoplasmic; sequence YLAGYCVRRHAELPN. A helical membrane pass occupies residues 155–175; it reads TSSAFAVPLAVFSLAAVLLLA. Residues 176-180 lie on the Periplasmic side of the membrane; sequence QPDFG. A helical transmembrane segment spans residues 181–201; sequence TALVLMATALGLLFLAGASLW. Position 202 (arginine 202) is a topological domain, cytoplasmic. A helical membrane pass occupies residues 203 to 223; sequence IGVLGLLLAGAAWLLIVGSPY. Residues 224–278 are Periplasmic-facing; it reads RWQRLTTFTDPWADPFNAGFQLTQSLIAIGRGEWFGVGLGASVQKLFYLPEAHTD. Residues 279–299 form a helical membrane-spanning segment; that stretch reads FLFAVLAEELGLLGVVVVVAL. At 300–322 the chain is on the cytoplasmic side; the sequence is FTYLAWRGMQIGLASLRADRPFG. Residues 323 to 343 form a helical membrane-spanning segment; it reads AYLAWGLTISIGLQAFINMAV. Over 344 to 354 the chain is Periplasmic; that stretch reads TMGLLPTKGLT. Residues 355-375 form a helical membrane-spanning segment; the sequence is LPLMSYGGSSLIMTGIALALL. Residues 376-401 lie on the Cytoplasmic side of the membrane; it reads LRVDYEARLAAQQPRPRKRPSGRVRP.

Belongs to the SEDS family. FtsW subfamily.

The protein localises to the cell inner membrane. The enzyme catalyses [GlcNAc-(1-&gt;4)-Mur2Ac(oyl-L-Ala-gamma-D-Glu-L-Lys-D-Ala-D-Ala)](n)-di-trans,octa-cis-undecaprenyl diphosphate + beta-D-GlcNAc-(1-&gt;4)-Mur2Ac(oyl-L-Ala-gamma-D-Glu-L-Lys-D-Ala-D-Ala)-di-trans,octa-cis-undecaprenyl diphosphate = [GlcNAc-(1-&gt;4)-Mur2Ac(oyl-L-Ala-gamma-D-Glu-L-Lys-D-Ala-D-Ala)](n+1)-di-trans,octa-cis-undecaprenyl diphosphate + di-trans,octa-cis-undecaprenyl diphosphate + H(+). Its pathway is cell wall biogenesis; peptidoglycan biosynthesis. In terms of biological role, peptidoglycan polymerase that is essential for cell division. In Alkalilimnicola ehrlichii (strain ATCC BAA-1101 / DSM 17681 / MLHE-1), this protein is Probable peptidoglycan glycosyltransferase FtsW.